The chain runs to 284 residues: RNase adapter protein RapZ (284 aa).

8 to 15 provides a ligand contact to ATP; the sequence is GRSGSGKS. 56–59 contributes to the GTP binding site; it reads DVRN. The tract at residues 266–284 is RNA-binding; that stretch reads RSRGKNVQSRHRTLEKRKT.

This sequence belongs to the RapZ-like family. RapZ subfamily. Homotrimer.

Functionally, modulates the synthesis of GlmS, by affecting the processing and stability of the regulatory small RNA GlmZ. When glucosamine-6-phosphate (GlcN6P) concentrations are high in the cell, RapZ binds GlmZ and targets it to cleavage by RNase E. Consequently, GlmZ is inactivated and unable to activate GlmS synthesis. Under low GlcN6P concentrations, RapZ is sequestered and inactivated by an other regulatory small RNA, GlmY, preventing GlmZ degradation and leading to synthesis of GlmS. The polypeptide is RNase adapter protein RapZ (Salmonella arizonae (strain ATCC BAA-731 / CDC346-86 / RSK2980)).